Here is a 152-residue protein sequence, read N- to C-terminus: Ribosomal RNA large subunit methyltransferase H (152 aa).

Residues L69, G96, and 118-123 each bind S-adenosyl-L-methionine; that span reads FGKLTF.

This sequence belongs to the RNA methyltransferase RlmH family. As to quaternary structure, homodimer.

The protein localises to the cytoplasm. It catalyses the reaction pseudouridine(1915) in 23S rRNA + S-adenosyl-L-methionine = N(3)-methylpseudouridine(1915) in 23S rRNA + S-adenosyl-L-homocysteine + H(+). Its function is as follows. Specifically methylates the pseudouridine at position 1915 (m3Psi1915) in 23S rRNA. The polypeptide is Ribosomal RNA large subunit methyltransferase H (Mesomycoplasma hyopneumoniae (strain 232) (Mycoplasma hyopneumoniae)).